Consider the following 137-residue polypeptide: Large ribosomal subunit protein bL12 (137 aa).

Belongs to the bacterial ribosomal protein bL12 family. As to quaternary structure, homodimer. Part of the ribosomal stalk of the 50S ribosomal subunit. Forms a multimeric L10(L12)X complex, where L10 forms an elongated spine to which 2 to 4 L12 dimers bind in a sequential fashion. Binds GTP-bound translation factors.

Functionally, forms part of the ribosomal stalk which helps the ribosome interact with GTP-bound translation factors. Is thus essential for accurate translation. The polypeptide is Large ribosomal subunit protein bL12 (Gloeobacter violaceus (strain ATCC 29082 / PCC 7421)).